A 719-amino-acid chain; its full sequence is MYNFLSCKKKSIILQVLLIICTYNILLNFVNIFVNNNEKNHKNKYENRIKSFYVEAYNWNFLEKWKSINTNEKLEYKINYNIGLNIDAEIGDFGDYNSDVKTDLILFKYDKDKLLSTIFIYVFSVKENKFIYHTEVSFEGKIMNVTAIDLNFDGALDVLVLFKDNKDSSKSNKYYVAAFLQNDNDQLEEIWNSKKKEQNDESITDNEEDNIYYTNIHPLICDINNDGLPDIIGQQSGGPDGFFRFIWINTRNGFKSFLWKNINIFKYSELDEITNPNSSAIVDINGDCKSDLVFTVYNSYEKRIGLEIWLNKIIDGKSFYVKYSQDYLLPPNSLQVLFGDFNGDGSIDLVVPTCVKSSFCNYCCVSDDKIYFIPNIQKKICDSSWKKPDETKCRPASNLCSESDFEFQQNLTDDFISVVDTSGLHLSGNADYPYYLSVGDIDDDGYLDLLITLKNDKGQKYVRIYKNELKIHYEENSLEVRGFYNFYQFVTSPEESVTDVYNAAFFDIFENGVLDILIFGKYITSNKKTKYAAVGFIRNNETDSLFLKSTALNGICVNDCYKEKDKITTKTLGGNAHGPTFKITVIDVNGVKSSRIGVQKSQSAHFPLQLPYVLFGLGRTSNYVEEFYVGMPTHEQKYYNMWVSIIPNSHIIVIPYPLNNSNKWQIQLSVNPSKKFYSILYITLICLSVIGVLIFILDRKEKVEDSKEELGFKSHFVIG.

An N-terminal signal peptide occupies residues 1-32 (MYNFLSCKKKSIILQVLLIICTYNILLNFVNI). Residues 33-677 (FVNNNEKNHK…LSVNPSKKFY (645 aa)) lie on the Extracellular side of the membrane. Residues N144, N277, N410, N540, and N659 are each glycosylated (N-linked (GlcNAc...) asparagine). The helical transmembrane segment at 678–697 (SILYITLICLSVIGVLIFIL) threads the bilayer. The Cytoplasmic segment spans residues 698–719 (DRKEKVEDSKEELGFKSHFVIG).

It belongs to the TIP family.

It localises to the membrane. In terms of biological role, may protect the parasite against attack by the host immune system by immunomodulation. The sequence is that of T-cell immunomodulatory protein homolog from Plasmodium falciparum (isolate 3D7).